Reading from the N-terminus, the 892-residue chain is Translation initiation factor IF-2 (892 aa).

2 disordered regions span residues 32–102 and 114–300; these read LAQA…PGDA and KAPE…KQAE. Over residues 35 to 48 the composition is skewed to polar residues; sequence AGSSDTKNSPASKA. The segment covering 139 to 166 has biased composition (basic and acidic residues); that stretch reads QEEKKESSEETSPERVEETLIIRTRTEP. Positions 200-211 are enriched in low complexity; it reads AASTEETTQQQP. Residues 212–224 are compositionally biased toward polar residues; it reads RQNDAASYNNKQQ. A compositionally biased stretch (low complexity) spans 225–238; that stretch reads PSGTSSRPASSAPS. A compositionally biased stretch (basic and acidic residues) spans 252–276; that stretch reads RGSERDRSKRSDESVKAFTGRDRYG. A tr-type G domain is found at 397 to 566; sequence IRSPIVAFMG…ALQAEVLELK (170 aa). The G1 stretch occupies residues 406–413; it reads GHVDHGKT. 406–413 is a binding site for GTP; that stretch reads GHVDHGKT. The interval 431–435 is G2; that stretch reads AITQH. The G3 stretch occupies residues 452–455; that stretch reads DTPG. GTP is bound by residues 452–456 and 506–509; these read DTPGH and NKCD. Residues 506–509 are G4; the sequence is NKCD. The segment at 542–544 is G5; it reads SAK.

This sequence belongs to the TRAFAC class translation factor GTPase superfamily. Classic translation factor GTPase family. IF-2 subfamily.

Its subcellular location is the cytoplasm. In terms of biological role, one of the essential components for the initiation of protein synthesis. Protects formylmethionyl-tRNA from spontaneous hydrolysis and promotes its binding to the 30S ribosomal subunits. Also involved in the hydrolysis of GTP during the formation of the 70S ribosomal complex. The chain is Translation initiation factor IF-2 from Chlamydia trachomatis serovar A (strain ATCC VR-571B / DSM 19440 / HAR-13).